Consider the following 228-residue polypeptide: Ferric nitrobindin-like protein (228 aa).

The interval 1-21 is disordered; that stretch reads MTSDEVRDGAGSPADSSKGNK. The GXWXGXG motif lies at 75–81; sequence GVWRGEG.

The protein belongs to the nitrobindin family.

In Mycobacterium leprae (strain TN), this protein is Ferric nitrobindin-like protein.